Here is a 511-residue protein sequence, read N- to C-terminus: Probable Xaa-Pro aminopeptidase MAA_08947 (511 aa).

Residues D275, D286, E439, and E480 each coordinate Mn(2+).

The protein belongs to the peptidase M24B family. Requires Mn(2+) as cofactor.

The catalysed reaction is Release of any N-terminal amino acid, including proline, that is linked to proline, even from a dipeptide or tripeptide.. Catalyzes the removal of a penultimate prolyl residue from the N-termini of peptides. This chain is Probable Xaa-Pro aminopeptidase MAA_08947, found in Metarhizium robertsii (strain ARSEF 23 / ATCC MYA-3075) (Metarhizium anisopliae (strain ARSEF 23)).